Here is a 332-residue protein sequence, read N- to C-terminus: F-box/SPRY domain-containing protein 1 (332 aa).

The disordered stretch occupies residues 1–82 (MAENDGETIV…RSPRRPEVSA (82 aa)). Polar residues-rich tracts occupy residues 15–28 (CNLT…SSGL) and 49–64 (NPSS…QLTP). Residues 79–127 (EVSASRLPLKVLNQIFQYLPLKDLRSAMLTCHSWNNALSMEDSDIWQYL) form the F-box domain. The B30.2/SPRY domain occupies 138 to 330 (SDPFLLAELG…VTMVYVGSPQ (193 aa)).

Belongs to the FBXO45/Fsn family. In terms of assembly, component of an SCF (SKP1-CUL1-F-box protein) E3 ubiquitin ligase complex composed of cul-1, fsn-1, rpm-1 and skr-1. Interacts (via SPRY domain) with scd-2 (via cytoplasmic domain). Interacts (via SPRY domain) with convertase egl-3 (via C-terminus). As to expression, expressed in GABAergic neuromuscular junctions (NMJs).

Its subcellular location is the synapse. It functions in the pathway protein modification; protein ubiquitination. Component of a SCF (SKP1-CUL1-F-box protein) E3 ubiquitin ligase complex which is required for the restriction and/or maturation of synapses in GABAergic neuromuscular junction (NMJ) presynaptic neurons. Promotes NRJ synapse development and synaptic transmission by negatively regulating the daf-2/InsR pathway in muscles. By targeting convertase egl-3 for degradation, negatively modulates insulin-like protein ins-4 and ins-6 processing. May stabilize synapse formation by promoting the down-regulation of scd-2. Regulates axon termination in PLM and ALM neurons. The polypeptide is F-box/SPRY domain-containing protein 1 (fsn-1) (Caenorhabditis elegans).